Reading from the N-terminus, the 73-residue chain is Large ribosomal subunit protein bL31 (73 aa).

Cys-16, Cys-18, Cys-37, and Cys-40 together coordinate Zn(2+).

The protein belongs to the bacterial ribosomal protein bL31 family. Type A subfamily. In terms of assembly, part of the 50S ribosomal subunit. Requires Zn(2+) as cofactor.

Binds the 23S rRNA. The polypeptide is Large ribosomal subunit protein bL31 (Hamiltonella defensa subsp. Acyrthosiphon pisum (strain 5AT)).